The chain runs to 62 residues: Potassium channel toxin kappa-KTx 3.2 (62 aa).

Positions 1-26 (MKSTLMTASLLILVLLSIVDYASVYA) are cleaved as a signal peptide. A propeptide spanning residues 27–36 (ELIDSEISME) is cleaved from the precursor. Intrachain disulfides connect Cys43–Cys61 and Cys47–Cys57.

It belongs to the short scorpion toxin superfamily. Potassium channel inhibitor kappa-KTx family. Kappa-KTx 3 subfamily. Expressed by the venom gland.

It is found in the secreted. Potassium channel inhibitor (Kv). This chain is Potassium channel toxin kappa-KTx 3.2, found in Heterometrus petersii (Asian forest scorpion).